The chain runs to 216 residues: GTP-binding nuclear protein spi1 (216 aa).

The Small GTPase Ran-type domain maps to 6-170; sequence NVPTFKLVLV…LWLARKLVGN (165 aa). GTP is bound at residue 17-24; sequence DGGTGKTT. Thr20 carries the phosphothreonine modification. The switch-I stretch occupies residues 36–44; it reads KKYIATLGV. Residues Gly67, 121 to 124, and 149 to 151 each bind GTP; these read NKVD and SAK. Residues 67-83 form a switch-II region; it reads GQEKLGGLRDGYYIQGQ.

The protein belongs to the small GTPase superfamily. Ran family. As to quaternary structure, oligomer of dis3, pim1 and spi1. Found in a nuclear export complex with RanGTP, exportin and pre-miRNA. Interacts with fft3.

It is found in the nucleus. In terms of biological role, GTP-binding protein involved in nucleocytoplasmic transport. Required for the import of protein into the nucleus and also for RNA export. The protein is GTP-binding nuclear protein spi1 (spi1) of Schizosaccharomyces pombe (strain 972 / ATCC 24843) (Fission yeast).